We begin with the raw amino-acid sequence, 619 residues long: MAAVVQQNDLVFEFASNVMEDERQLGDPAIFPAVIVEHVPGADILNSYAGLACVEEPNDMITESSLDVAEEEIIDDDDDDITLTVEASCHDGDETIETIEAAEALLNMDSPGPMLDEKRINNNIFSSPEDDMVVAPVTHVSVTLDGIPEVMETQQVQEKYADSPGASSPEQPKRKKGRKTKPPRPDSPATTPNISVKKKNKDGKGNTIYLWEFLLALLQDKATCPKYIKWTQREKGIFKLVDSKAVSRLWGKHKNKPDMNYETMGRALRYYYQRGILAKVEGQRLVYQFKEMPKDLIYINDEDPSSSIESSDPSLSSSATSNRNQTSRSRVSSSPGVKGGATTVLKPGNSKAAKPKDPVEVAQPSEVLRTVQPTQSPYPTQLFRTVHVVQPVQAVPEGEAARTSTMQDETLNSSVQSIRTIQAPTQVPVVVSPRNQQLHTVTLQTVPLTTVIASTDPSAGTGSQKFILQAIPSSQPMTVLKENVMLQSQKAGSPPSIVLGPAQVQQVLTSNVQTICNGTVSVASSPSFSATAPVVTFSPRSSQLVAHPPGTVITSVIKTQETKTLTQEVEKKESEDHLKENTEKTEQQPQPYVMVVSSSNGFTSQVAMKQNELLEPNSF.

Phosphoserine occurs at positions 110, 163, 167, and 168. Residues 158 to 199 (EKYADSPGASSPEQPKRKKGRKTKPPRPDSPATTPNISVKKK) are disordered. Residues 173 to 182 (KRKKGRKTKP) show a composition bias toward basic residues. A Phosphoserine modification is found at Ser-187. Thr-190 bears the Phosphothreonine mark. Positions 208–290 (IYLWEFLLAL…EGQRLVYQFK (83 aa)) form a DNA-binding region, ETS. The interval 300–366 (NDEDPSSSIE…DPVEVAQPSE (67 aa)) is disordered. The span at 305–321 (SSSIESSDPSLSSSATS) shows a compositional bias: low complexity. Polar residues predominate over residues 322-335 (NRNQTSRSRVSSSP). Residue Ser-432 is modified to Phosphoserine. The segment at 564-592 (TLTQEVEKKESEDHLKENTEKTEQQPQPY) is disordered. Residues 568–586 (EVEKKESEDHLKENTEKTE) show a composition bias toward basic and acidic residues.

It belongs to the ETS family. Binds to the underphosphorylated form of RB. May interact with other transcription factors in order to regulate specific genes. Interacts with RUNX1. In fetal tissues, it is highly expressed in heart, lung liver and kidney, and weakly expressed in brain. In adult, it is highly expressed in pancreas, spleen, thymus and peripheral blood leukocytes, expressed at moderate levels in heart, placenta, lung, liver, skeletal muscle, kidney, prostate, ovary, small intestine and colon, and weakly expressed in brain and testis.

Its subcellular location is the nucleus. In terms of biological role, transcription factor that activates the LYN and BLK promoters. Appears to be required for the T-cell-receptor-mediated trans activation of HIV-2 gene expression. Binds specifically to two purine-rich motifs in the HIV-2 enhancer. The chain is ETS-related transcription factor Elf-1 (ELF1) from Homo sapiens (Human).